Consider the following 209-residue polypeptide: Neurotrophin-4 (209 aa).

A signal peptide spans 1–21; sequence MLPRHSCSLLLFLLLLPSVPM. A propeptide spanning residues 22–79 is cleaved from the precursor; sequence EPQPPSSTLPPFLAPEWDLLSPRVALSRGTPAGPPLLFLLEAGAYGEPAGAPANRSRR. The N-linked (GlcNAc...) asparagine glycan is linked to Asn-75. 3 disulfide bridges follow: Cys-96/Cys-169, Cys-140/Cys-198, and Cys-157/Cys-200.

Belongs to the NGF-beta family. Expressed in thymus, muscle, ovary, brain, heart, stomach and kidney. Expressed in both embryo and adult tissues.

The protein resides in the secreted. Target-derived survival factor for peripheral sensory sympathetic neurons. May promote ameloblast differentiation and subsequent reduction in proliferation of ameloblasts. In Rattus norvegicus (Rat), this protein is Neurotrophin-4 (Ntf4).